The sequence spans 262 residues: Protein Pcal_0062 (262 aa).

The protein belongs to the CinA family.

This Pyrobaculum calidifontis (strain DSM 21063 / JCM 11548 / VA1) protein is Protein Pcal_0062.